Here is a 296-residue protein sequence, read N- to C-terminus: Formamidopyrimidine-DNA glycosylase (296 aa).

Catalysis depends on Pro-2, which acts as the Schiff-base intermediate with DNA. Residue Glu-3 is the Proton donor of the active site. The active-site Proton donor; for beta-elimination activity is the Lys-58. Positions 106, 125, and 167 each coordinate DNA. An FPG-type zinc finger spans residues 258–294; sequence RVYDRVGLPCSRPGCAGAITRIVQANRSTFFCATCQP. Arg-284 serves as the catalytic Proton donor; for delta-elimination activity.

Belongs to the FPG family. In terms of assembly, monomer. The cofactor is Zn(2+).

It catalyses the reaction Hydrolysis of DNA containing ring-opened 7-methylguanine residues, releasing 2,6-diamino-4-hydroxy-5-(N-methyl)formamidopyrimidine.. The enzyme catalyses 2'-deoxyribonucleotide-(2'-deoxyribose 5'-phosphate)-2'-deoxyribonucleotide-DNA = a 3'-end 2'-deoxyribonucleotide-(2,3-dehydro-2,3-deoxyribose 5'-phosphate)-DNA + a 5'-end 5'-phospho-2'-deoxyribonucleoside-DNA + H(+). In terms of biological role, involved in base excision repair of DNA damaged by oxidation or by mutagenic agents. Acts as a DNA glycosylase that recognizes and removes damaged bases. Has a preference for oxidized purines, such as 7,8-dihydro-8-oxoguanine (8-oxoG). Has AP (apurinic/apyrimidinic) lyase activity and introduces nicks in the DNA strand. Cleaves the DNA backbone by beta-delta elimination to generate a single-strand break at the site of the removed base with both 3'- and 5'-phosphates. In Methylobacterium radiotolerans (strain ATCC 27329 / DSM 1819 / JCM 2831 / NBRC 15690 / NCIMB 10815 / 0-1), this protein is Formamidopyrimidine-DNA glycosylase.